The following is a 274-amino-acid chain: Thiamine kinase (274 aa).

This sequence belongs to the thiamine kinase family.

It carries out the reaction thiamine + ATP = thiamine phosphate + ADP + H(+). It functions in the pathway cofactor biosynthesis; thiamine diphosphate biosynthesis; thiamine phosphate from thiamine: step 1/1. Its function is as follows. Catalyzes the ATP-dependent phosphorylation of thiamine to thiamine phosphate. Is involved in thiamine salvage. This chain is Thiamine kinase, found in Shigella flexneri serotype 5b (strain 8401).